Consider the following 260-residue polypeptide: 3'-5' ssDNA/RNA exonuclease TatD (260 aa).

The a divalent metal cation site is built by Glu-92, His-128, and His-153.

This sequence belongs to the metallo-dependent hydrolases superfamily. TatD-type hydrolase family. TatD subfamily. As to quaternary structure, monomer. Mg(2+) serves as cofactor.

It is found in the cytoplasm. Its function is as follows. 3'-5' exonuclease that prefers single-stranded DNA and RNA. May play a role in the H(2)O(2)-induced DNA damage repair. This chain is 3'-5' ssDNA/RNA exonuclease TatD, found in Pectobacterium parmentieri (strain WPP163) (Pectobacterium wasabiae (strain WPP163)).